The sequence spans 1287 residues: DENN domain-containing protein 5A (1287 aa).

Residues 57-259 (STTEGENFEQ…EVPLPPPGRS (203 aa)) form the uDENN domain. Phosphoserine is present on Ser193. The cDENN domain maps to 278-414 (ELPLFDFPVK…LEFVQEVSEI (137 aa)). The 183-residue stretch at 416–598 (MAFGVPPEGN…IMCHDDDDKD (183 aa)) folds into the dDENN domain. One can recognise an RUN 1 domain in the interval 787 to 950 (VEENTLIASL…DYFCFTNVFT (164 aa)). Residues 954 to 1062 (IPYHILIVPS…DDGSLERVLV (109 aa)) form the PLAT domain. Thr1079 is modified (phosphothreonine). Phosphoserine occurs at positions 1085, 1087, and 1096. An RUN 2 domain is found at 1134–1280 (TLLLCGECGL…QEFNITLDTS (147 aa)).

It belongs to the RAB6IP1 family. As to quaternary structure, interacts with RAB6A bound to GTP.

Its subcellular location is the golgi apparatus membrane. Functionally, guanine nucleotide exchange factor (GEF) which may activate RAB6A and RAB39A and/or RAB39B. Promotes the exchange of GDP to GTP, converting inactive GDP-bound Rab proteins into their active GTP-bound form. Involved in the negative regulation of neurite outgrowth. This is DENN domain-containing protein 5A (Dennd5a) from Mus musculus (Mouse).